We begin with the raw amino-acid sequence, 883 residues long: Phosphoenolpyruvate carboxylase (883 aa).

Active-site residues include H138 and K546.

It belongs to the PEPCase type 1 family. Requires Mg(2+) as cofactor.

It catalyses the reaction oxaloacetate + phosphate = phosphoenolpyruvate + hydrogencarbonate. Functionally, forms oxaloacetate, a four-carbon dicarboxylic acid source for the tricarboxylic acid cycle. In Escherichia coli O81 (strain ED1a), this protein is Phosphoenolpyruvate carboxylase.